A 209-amino-acid polypeptide reads, in one-letter code: Uracil phosphoribosyltransferase (209 aa).

Residues arginine 79, arginine 104, and 131-139 (DPMLATGGS) contribute to the 5-phospho-alpha-D-ribose 1-diphosphate site. Uracil is bound by residues isoleucine 194 and 199–201 (GDA). Aspartate 200 serves as a coordination point for 5-phospho-alpha-D-ribose 1-diphosphate.

It belongs to the UPRTase family. Mg(2+) serves as cofactor.

The enzyme catalyses UMP + diphosphate = 5-phospho-alpha-D-ribose 1-diphosphate + uracil. Its pathway is pyrimidine metabolism; UMP biosynthesis via salvage pathway; UMP from uracil: step 1/1. Allosterically activated by GTP. Its function is as follows. Catalyzes the conversion of uracil and 5-phospho-alpha-D-ribose 1-diphosphate (PRPP) to UMP and diphosphate. This is Uracil phosphoribosyltransferase from Clostridium tetani (strain Massachusetts / E88).